Reading from the N-terminus, the 448-residue chain is Methionine aminopeptidase 2 (448 aa).

Residues 1–47 (MTSSVDKVSQKVADVKLGSSKSTKNNKSKGKGKSNKNQVVEDDDEDD) form a disordered region. Basic residues predominate over residues 24 to 34 (KNNKSKGKGKS). Substrate is bound at residue His-198. Residues Asp-218, Asp-229, and His-298 each contribute to the a divalent metal cation site. Residue His-306 participates in substrate binding. A divalent metal cation is bound by residues Glu-331 and Glu-429.

It belongs to the peptidase M24A family. Methionine aminopeptidase eukaryotic type 2 subfamily. Requires Co(2+) as cofactor. Zn(2+) serves as cofactor. Mn(2+) is required as a cofactor. The cofactor is Fe(2+).

The protein resides in the cytoplasm. It catalyses the reaction Release of N-terminal amino acids, preferentially methionine, from peptides and arylamides.. Cotranslationally removes the N-terminal methionine from nascent proteins. The N-terminal methionine is often cleaved when the second residue in the primary sequence is small and uncharged (Met-Ala-, Cys, Gly, Pro, Ser, Thr, or Val). This is Methionine aminopeptidase 2 from Komagataella phaffii (strain GS115 / ATCC 20864) (Yeast).